The primary structure comprises 352 residues: NAD(P)H pyrophosphatase NUDT13, mitochondrial (352 aa).

A mitochondrion-targeting transit peptide spans 1–20 (MSLYCRTFFRRKSFGCYRLL). One can recognise a Nudix hydrolase domain in the interval 196 to 323 (PQMAPVVITL…SLALQPSEAS (128 aa)). The short motif at 216–240 (RQSSFPKGLYSALAGFCDIGESVEE) is the Nudix box element.

This sequence belongs to the Nudix hydrolase family. The cofactor is Mg(2+). Mn(2+) is required as a cofactor.

It localises to the mitochondrion. The enzyme catalyses NADH + H2O = reduced beta-nicotinamide D-ribonucleotide + AMP + 2 H(+). It catalyses the reaction NAD(+) + H2O = beta-nicotinamide D-ribonucleotide + AMP + 2 H(+). It carries out the reaction NADPH + H2O = reduced beta-nicotinamide D-ribonucleotide + adenosine 2',5'-bisphosphate + 2 H(+). Functionally, NAD(P)H pyrophosphatase that hydrolyzes NADH into NMNH and AMP, and NADPH into NMNH and 2',5'-ADP. Has a marked preference for the reduced pyridine nucleotides. Does not show activity toward NAD-capped RNAs; the NAD-cap is an atypical cap present at the 5'-end of some RNAs. This is NAD(P)H pyrophosphatase NUDT13, mitochondrial from Mus musculus (Mouse).